Reading from the N-terminus, the 436-residue chain is Putative F-box/FBD/LRR-repeat protein At5g44960 (436 aa).

The region spanning 4–50 is the F-box domain; that stretch reads CDYINELPDSLLTQILLDLRTKDSVKTSVSSKRWRNLWLNVPGLDLF. 2 LRR repeats span residues 287–310 and 397–420; these read ISSV…SKLG and SAVL…SYKK. The 53-residue stretch at 355-407 folds into the FBD domain; sequence EENIDFHEVPQCLISTLEYVHINKLMMMEQSGIKLVNYFIENSAVLKKLTLRF.

This Arabidopsis thaliana (Mouse-ear cress) protein is Putative F-box/FBD/LRR-repeat protein At5g44960.